A 237-amino-acid chain; its full sequence is dTDP-3-amino-3,4,6-trideoxy-alpha-D-glucopyranose N,N-dimethyltransferase (237 aa).

Substrate contacts are provided by Tyr-14 and Arg-17. Residues Tyr-21, Ala-46, Glu-67, 89 to 90 (DM), and Met-105 contribute to the S-adenosyl-L-methionine site. Substrate-binding positions include 145-147 (TFA), Ser-152, 165-169 (RVSHS), and Arg-229.

Belongs to the methyltransferase TylM1/DesVI family. Homodimer.

It carries out the reaction dTDP-3-amino-3,4,6-trideoxy-alpha-D-glucose + 2 S-adenosyl-L-methionine = dTDP-alpha-D-desosamine + 2 S-adenosyl-L-homocysteine + 2 H(+). Its pathway is antibiotic biosynthesis. S-adenosyl-L-methionine-dependent methyltransferase involved in the biosynthesis of desosamine, found in certain macrolide antibiotics such as erthyromycin, azithromycin, clarithromycin, and methymycin. Catalyzes the last step in the biosynthesis of dTDP-desosamine, i.e. the N,N-dimethylation of the 3-amino group of dTDP-3-amino-3,4,6-trideoxy-alpha-D-glucose. This is dTDP-3-amino-3,4,6-trideoxy-alpha-D-glucopyranose N,N-dimethyltransferase from Streptomyces venezuelae.